Reading from the N-terminus, the 252-residue chain is Osmotin-like protein (252 aa).

A signal peptide spans 1–24; sequence MASSSAKILLPLSLLFTLLSLSQS.

The protein localises to the secreted. It is found in the cell wall. This Solanum lycopersicum (Tomato) protein is Osmotin-like protein.